The chain runs to 446 residues: Maltoporin (446 aa).

The first 25 residues, 1–25 (MMITLRKLPLAVAVAAGVMSAQAMA), serve as a signal peptide directing secretion.

It belongs to the porin LamB (TC 1.B.3) family. As to quaternary structure, homotrimer formed of three 18-stranded antiparallel beta-barrels, containing three independent channels.

The protein resides in the cell outer membrane. It catalyses the reaction beta-maltose(in) = beta-maltose(out). Its function is as follows. Involved in the transport of maltose and maltodextrins. The sequence is that of Maltoporin from Escherichia coli O7:K1 (strain IAI39 / ExPEC).